A 586-amino-acid chain; its full sequence is Pyruvate kinase (586 aa).

Position 32 (R32) interacts with substrate. Residues N34, S36, D66, and T67 each coordinate K(+). Residue 34–37 (NFSH) coordinates ATP. 2 residues coordinate ATP: R73 and K156. Position 222 (E222) interacts with Mg(2+). Substrate is bound by residues G245, D246, and T278. Mg(2+) is bound at residue D246.

Belongs to the pyruvate kinase family. This sequence in the C-terminal section; belongs to the PEP-utilizing enzyme family. The cofactor is Mg(2+). K(+) serves as cofactor.

It catalyses the reaction pyruvate + ATP = phosphoenolpyruvate + ADP + H(+). The protein operates within carbohydrate degradation; glycolysis; pyruvate from D-glyceraldehyde 3-phosphate: step 5/5. This chain is Pyruvate kinase (pyk), found in Staphylococcus haemolyticus (strain JCSC1435).